The chain runs to 96 residues: Co-chaperonin GroES (96 aa).

The protein belongs to the GroES chaperonin family. As to quaternary structure, heptamer of 7 subunits arranged in a ring. Interacts with the chaperonin GroEL.

It is found in the cytoplasm. Functionally, together with the chaperonin GroEL, plays an essential role in assisting protein folding. The GroEL-GroES system forms a nano-cage that allows encapsulation of the non-native substrate proteins and provides a physical environment optimized to promote and accelerate protein folding. GroES binds to the apical surface of the GroEL ring, thereby capping the opening of the GroEL channel. This chain is Co-chaperonin GroES, found in Actinobacillus pleuropneumoniae serotype 5b (strain L20).